The chain runs to 247 residues: MSDPLVLIPARLAATRLPNKPLADIAGEAMIVHVWRRAVEAGIGPVVVATDTAEIARTVEAAGGLAVMTRADHPSGSDRLAEALEIVDPEGRHDVVVNVQGDLPTIDPAIIGAAIVPLADRTVDIVTLCAPITDPHEADNPNVVKLVGHAVGPGRLRALYFTRARAPWGDGPLWHHIGLYAYRRTALSRFVALPPGELEVREKLEQLRALEAGMRIDAAIVDDLPLGVDTPADLERARALLQGRRLN.

This sequence belongs to the KdsB family.

It localises to the cytoplasm. The catalysed reaction is 3-deoxy-alpha-D-manno-oct-2-ulosonate + CTP = CMP-3-deoxy-beta-D-manno-octulosonate + diphosphate. It functions in the pathway nucleotide-sugar biosynthesis; CMP-3-deoxy-D-manno-octulosonate biosynthesis; CMP-3-deoxy-D-manno-octulosonate from 3-deoxy-D-manno-octulosonate and CTP: step 1/1. The protein operates within bacterial outer membrane biogenesis; lipopolysaccharide biosynthesis. Activates KDO (a required 8-carbon sugar) for incorporation into bacterial lipopolysaccharide in Gram-negative bacteria. The sequence is that of 3-deoxy-manno-octulosonate cytidylyltransferase from Methylobacterium radiotolerans (strain ATCC 27329 / DSM 1819 / JCM 2831 / NBRC 15690 / NCIMB 10815 / 0-1).